A 168-amino-acid polypeptide reads, in one-letter code: PTS system glucose-specific EIIA component (168 aa).

The region spanning 38-142 (DEVFSNKIVG…STLTPVIISN (105 aa)) is the PTS EIIA type-1 domain. His75 and His90 together coordinate Zn(2+). His90 acts as the Tele-phosphohistidine intermediate; for EIIA activity in catalysis. A Phosphohistidine; by HPr modification is found at His90.

It depends on Zn(2+) as a cofactor.

Its subcellular location is the cytoplasm. The phosphoenolpyruvate-dependent sugar phosphotransferase system (sugar PTS), a major carbohydrate active transport system, catalyzes the phosphorylation of incoming sugar substrates concomitantly with their translocation across the cell membrane. The enzyme II complex composed of PtsG and Crr is involved in glucose transport. The chain is PTS system glucose-specific EIIA component (crr) from Buchnera aphidicola subsp. Baizongia pistaciae (strain Bp).